We begin with the raw amino-acid sequence, 591 residues long: MSLQQLKRKSLRDGWLMDGVVPSPGAEIDSPLFQTESKIQQLEKELESLQMQQLRLENPAAVQPEAKAIQTPFLNGEKIQQGGGQAGDAKEVTAGQANNTHGIIHEEQPTKEDQDMGTVLPIPAPRGKTVPKEDENQANPELKVDMEHQKVELVDLIQECPVENQTVEHVEKNKPHLDQEHTEKNQDGQHGILEFLTQDQQLGNPNLQHLDRYLITEVTVKHFEKNQAHPGQEKNQDEQHGILKYLTQDQQNENPNLGHLDQYLITEITLQSNPLENISVHDQTQSTSDQNMETKLPTDIPQQKESQSEGKIQTKDQGPEFELLYKDHSHEKGTTDQTQHQELLPSSIEPKEENPKAQDEKLDHHNESVSTVHEQKEVHDMDPRQLSTHQKSLSISEDQNQGSVSLSDPQNQDQSLALPEKGLEETPQLNLSHEVQCEEPSLMEQISISLLQSMEQNQEGADQTPKSVALEELSELLSSDMIKQSVLLSKNLEESPSTASTEETQETMCQAVIIPDLKKENSDPEVVQESSSHEPMSSTIAQSSSAEGNSSPESRPLLQKSQGTDSQQGGNTATQQEERRKKKTCQCCVVM.

Repeats lie at residues 171–174 (EKNK), 183–186 (EKNQ), 224–227 (EKNQ), and 234–237 (KNQD). The span at 282 to 293 (DQTQSTSDQNME) shows a compositional bias: polar residues. Disordered stretches follow at residues 282–317 (DQTQ…TKDQ), 332–413 (KGTT…QNQD), and 515–591 (PDLK…CVVM). Composition is skewed to basic and acidic residues over residues 306-317 (SQSEGKIQTKDQ) and 349-383 (EPKE…DMDP). 2 stretches are compositionally biased toward polar residues: residues 385 to 413 (QLST…QNQD) and 528 to 542 (QESS…TIAQ). Residues 543–554 (SSSAEGNSSPES) show a composition bias toward low complexity. Residues 559-575 (QKSQGTDSQQGGNTATQ) show a composition bias toward polar residues. The Nuclear localization signal signature appears at 579 to 583 (RRKKK). S-palmitoyl cysteine attachment occurs at residues Cys-585 and Cys-587. Cys-588 is modified (cysteine methyl ester). Cys-588 carries S-farnesyl cysteine lipidation. Positions 589-591 (VVM) are cleaved as a propeptide — removed in mature form.

The protein belongs to the paralemmin family. In terms of processing, may be phosphorylated during oocyte maturation. Post-translationally, palmitoylated on Cys-585 and Cys-587 and prenylated on Cys-588; which is required for membrane association. In Xenopus oocyte, in the central nervous system cells of tadpoles and adult frogs, and transiently in epithelial cells of stomach and gut of tadpoles. Highly expressed in kidney.

It is found in the cytoplasm. It localises to the nucleus. The protein resides in the cell membrane. Maternal ATP-binding protein that may have multiple functions during development, one of which may be associated with the development and maintenance of the central nervous system. The protein is Paralemmin-3 (palm3) of Xenopus laevis (African clawed frog).